The chain runs to 209 residues: Ribosomal RNA large subunit methyltransferase E (209 aa).

S-adenosyl-L-methionine-binding residues include glycine 63, tryptophan 65, aspartate 83, aspartate 99, and aspartate 124. The active-site Proton acceptor is the lysine 164.

The protein belongs to the class I-like SAM-binding methyltransferase superfamily. RNA methyltransferase RlmE family.

Its subcellular location is the cytoplasm. The catalysed reaction is uridine(2552) in 23S rRNA + S-adenosyl-L-methionine = 2'-O-methyluridine(2552) in 23S rRNA + S-adenosyl-L-homocysteine + H(+). Specifically methylates the uridine in position 2552 of 23S rRNA at the 2'-O position of the ribose in the fully assembled 50S ribosomal subunit. This chain is Ribosomal RNA large subunit methyltransferase E, found in Buchnera aphidicola subsp. Cinara cedri (strain Cc).